A 488-amino-acid polypeptide reads, in one-letter code: Malonate-semialdehyde dehydrogenase (488 aa).

7 residues coordinate NAD(+): Ala150, Phe152, Lys176, Glu179, Arg180, Ser229, and Thr251. Cys284 acts as the Nucleophile in catalysis. Glu382 is a binding site for NAD(+).

This sequence belongs to the aldehyde dehydrogenase family. IolA subfamily. In terms of assembly, homotetramer.

It carries out the reaction 3-oxopropanoate + NAD(+) + CoA + H2O = hydrogencarbonate + acetyl-CoA + NADH + H(+). The enzyme catalyses 2-methyl-3-oxopropanoate + NAD(+) + CoA + H2O = propanoyl-CoA + hydrogencarbonate + NADH + H(+). The protein operates within polyol metabolism; myo-inositol degradation into acetyl-CoA; acetyl-CoA from myo-inositol: step 7/7. In terms of biological role, catalyzes the oxidation of malonate semialdehyde (MSA) and methylmalonate semialdehyde (MMSA) into acetyl-CoA and propanoyl-CoA, respectively. Is involved in a myo-inositol catabolic pathway. Bicarbonate, and not CO2, is the end-product of the enzymatic reaction. In Listeria monocytogenes serotype 4b (strain CLIP80459), this protein is Malonate-semialdehyde dehydrogenase.